Reading from the N-terminus, the 382-residue chain is Alanine racemase 1 (382 aa).

Lys-39 (proton acceptor; specific for D-alanine) is an active-site residue. Position 39 is an N6-(pyridoxal phosphate)lysine (Lys-39). Residue Arg-138 coordinates substrate. The active-site Proton acceptor; specific for L-alanine is Tyr-265. Met-312 serves as a coordination point for substrate.

This sequence belongs to the alanine racemase family. Requires pyridoxal 5'-phosphate as cofactor.

The enzyme catalyses L-alanine = D-alanine. The protein operates within amino-acid biosynthesis; D-alanine biosynthesis; D-alanine from L-alanine: step 1/1. In terms of biological role, catalyzes the interconversion of L-alanine and D-alanine. May also act on other amino acids. This is Alanine racemase 1 (alr1) from Staphylococcus aureus (strain N315).